A 430-amino-acid chain; its full sequence is Cell division protein FtsZ (430 aa).

Residues 76-80, 163-165, glutamate 194, arginine 198, and aspartate 242 each bind GTP; these read GGGCN and GTG. Residues 374–418 are disordered; sequence KEKPQAKTSSKPVLSGPPAGVETVPSTTTPEDPLGEIPMAPELDI.

This sequence belongs to the FtsZ family. Homodimer. Polymerizes to form a dynamic ring structure in a strictly GTP-dependent manner. Interacts directly with several other division proteins.

It is found in the cytoplasm. Functionally, essential cell division protein that forms a contractile ring structure (Z ring) at the future cell division site. The regulation of the ring assembly controls the timing and the location of cell division. One of the functions of the FtsZ ring is to recruit other cell division proteins to the septum to produce a new cell wall between the dividing cells. Binds GTP and shows GTPase activity. The sequence is that of Cell division protein FtsZ from Synechocystis sp. (strain ATCC 27184 / PCC 6803 / Kazusa).